Consider the following 411-residue polypeptide: Protein PHLOEM PROTEIN 2-LIKE A5 (411 aa).

Positions 20–157 constitute a TIR domain; that stretch reads TGPQVFINFR…KWTEALFSVC (138 aa). Residue Glu-94 is part of the active site.

It carries out the reaction NAD(+) + H2O = ADP-D-ribose + nicotinamide + H(+). The protein is Protein PHLOEM PROTEIN 2-LIKE A5 (PP2A5) of Arabidopsis thaliana (Mouse-ear cress).